The primary structure comprises 319 residues: Formimidoylglutamase (319 aa).

6 residues coordinate Mn(2+): H131, D154, H156, D158, C248, and D250.

The protein belongs to the arginase family. The cofactor is Mn(2+).

The enzyme catalyses N-formimidoyl-L-glutamate + H2O = formamide + L-glutamate. It participates in amino-acid degradation; L-histidine degradation into L-glutamate; L-glutamate from N-formimidoyl-L-glutamate (hydrolase route): step 1/1. In terms of biological role, catalyzes the conversion of N-formimidoyl-L-glutamate to L-glutamate and formamide. This chain is Formimidoylglutamase, found in Legionella pneumophila (strain Lens).